A 1136-amino-acid polypeptide reads, in one-letter code: Myosin-binding protein C, fast-type (1136 aa).

Disordered regions lie at residues 1–55 (MPEA…KKPD) and 151–177 (APRQDSSGQSLESFKRSGDGKSEDAGE). A compositionally biased stretch (basic and acidic residues) spans 13–35 (KGKDAPKEAPAKQTPEEPPKEAP). The Ig-like C2-type 1 domain occupies 46–149 (PTGIFLKKPD…CDSCSFNVDV (104 aa)). Residues 163–174 (SFKRSGDGKSED) show a composition bias toward basic and acidic residues. Ig-like C2-type domains follow at residues 250-339 (SAAF…VKEP), 340-432 (PVLI…VEEK), 433-533 (QLEV…KQEP), and 534-633 (PKIH…VVDV). Fibronectin type-III domains lie at 636-732 (PPEA…IAPT) and 734-829 (APQH…IREI). The 95-residue stretch at 833–927 (PKIRLPRHLR…ATIRIRVVEK (95 aa)) folds into the Ig-like C2-type 6 domain. Residues 930–1025 (PAENVMVKEV…SKNTARILKT (96 aa)) enclose the Fibronectin type-III 3 domain. In terms of domain architecture, Ig-like C2-type 7 spans 1043 to 1136 (PKFLTPLMDR…ECKLDVRVPQ (94 aa)).

This sequence belongs to the immunoglobulin superfamily. MyBP family.

Its function is as follows. Thick filament-associated protein located in the crossbridge region of vertebrate striated muscle a bands. In vitro it binds MHC, F-actin and native thin filaments, and modifies the activity of actin-activated myosin ATPase. It may modulate muscle contraction or may play a more structural role. This chain is Myosin-binding protein C, fast-type (Mybpc2), found in Mus musculus (Mouse).